Here is a 130-residue protein sequence, read N- to C-terminus: Small ribosomal subunit protein uS11 (130 aa).

Belongs to the universal ribosomal protein uS11 family. In terms of assembly, part of the 30S ribosomal subunit. Interacts with proteins S7 and S18. Binds to IF-3.

In terms of biological role, located on the platform of the 30S subunit, it bridges several disparate RNA helices of the 16S rRNA. Forms part of the Shine-Dalgarno cleft in the 70S ribosome. The polypeptide is Small ribosomal subunit protein uS11 (Campylobacter jejuni subsp. jejuni serotype O:6 (strain 81116 / NCTC 11828)).